The chain runs to 649 residues: 1-deoxy-D-xylulose-5-phosphate synthase 1 (649 aa).

Thiamine diphosphate-binding positions include His-79 and 120-122; that span reads AHS. Asp-151 contributes to the Mg(2+) binding site. Residues 152–153, Asn-180, Tyr-289, and Glu-371 contribute to the thiamine diphosphate site; that span reads GS. Asn-180 contributes to the Mg(2+) binding site.

The protein belongs to the transketolase family. DXPS subfamily. As to quaternary structure, homodimer. Requires Mg(2+) as cofactor. It depends on thiamine diphosphate as a cofactor.

It catalyses the reaction D-glyceraldehyde 3-phosphate + pyruvate + H(+) = 1-deoxy-D-xylulose 5-phosphate + CO2. The protein operates within metabolic intermediate biosynthesis; 1-deoxy-D-xylulose 5-phosphate biosynthesis; 1-deoxy-D-xylulose 5-phosphate from D-glyceraldehyde 3-phosphate and pyruvate: step 1/1. Functionally, catalyzes the acyloin condensation reaction between C atoms 2 and 3 of pyruvate and glyceraldehyde 3-phosphate to yield 1-deoxy-D-xylulose-5-phosphate (DXP). The protein is 1-deoxy-D-xylulose-5-phosphate synthase 1 of Zymomonas mobilis subsp. mobilis (strain ATCC 31821 / ZM4 / CP4).